The sequence spans 550 residues: Glucose-6-phosphate isomerase (550 aa).

Glu-356 serves as the catalytic Proton donor. Active-site residues include His-387 and Lys-515.

The protein belongs to the GPI family.

It is found in the cytoplasm. It catalyses the reaction alpha-D-glucose 6-phosphate = beta-D-fructose 6-phosphate. It participates in carbohydrate biosynthesis; gluconeogenesis. The protein operates within carbohydrate degradation; glycolysis; D-glyceraldehyde 3-phosphate and glycerone phosphate from D-glucose: step 2/4. Its function is as follows. Catalyzes the reversible isomerization of glucose-6-phosphate to fructose-6-phosphate. The chain is Glucose-6-phosphate isomerase from Vibrio atlanticus (strain LGP32) (Vibrio splendidus (strain Mel32)).